An 82-amino-acid polypeptide reads, in one-letter code: Envelope small membrane protein (82 aa).

Residues 1 to 16 (MLPFVHEQIGTIIVNF) are Virion surface-facing. Residues 17 to 37 (FILTVVCAITLLVCLAVLTAI) traverse the membrane as a helical segment. Over 38–78 (RLCVQCASGVNTLLFVPAFYIYNTGRNAYFKFQENRPPFPP) the chain is Intravirion.

The protein belongs to the betacoronaviruses E protein family. In terms of assembly, homopentamer. Interacts with membrane protein M in the budding compartment of the host cell, which is located between endoplasmic reticulum and the Golgi complex. Interacts with Nucleoprotein.

It is found in the host Golgi apparatus membrane. In terms of biological role, plays a central role in virus morphogenesis and assembly. Acts as a viroporin and self-assembles in host membranes forming pentameric protein-lipid pores that allow ion transport. Also plays a role in the induction of apoptosis. This Tylonycteris pachypus (Lesser bamboo bat) protein is Envelope small membrane protein.